Reading from the N-terminus, the 491-residue chain is Argininosuccinate lyase (491 aa).

The protein belongs to the lyase 1 family. Argininosuccinate lyase subfamily.

The protein localises to the cytoplasm. It catalyses the reaction 2-(N(omega)-L-arginino)succinate = fumarate + L-arginine. The protein operates within amino-acid biosynthesis; L-arginine biosynthesis; L-arginine from L-ornithine and carbamoyl phosphate: step 3/3. The protein is Argininosuccinate lyase of Methanosarcina mazei (strain ATCC BAA-159 / DSM 3647 / Goe1 / Go1 / JCM 11833 / OCM 88) (Methanosarcina frisia).